The following is a 300-amino-acid chain: Fluorinase (300 aa).

Residues Asp16, 21–23, Tyr77, Ser158, Asp211, Asn216, 270–271, and 278–280 contribute to the S-adenosyl-L-methionine site; these read DDS, SR, and RNA.

It belongs to the SAM hydrolase / SAM-dependent halogenase family. Homohexamer.

It carries out the reaction fluoride + S-adenosyl-L-methionine = 5'-deoxy-5'-fluoroadenosine + L-methionine. The catalysed reaction is chloride + S-adenosyl-L-methionine = 5'-chloro-5'-deoxyadenosine + L-methionine. Its activity is regulated as follows. Activity is severely inhibited by 1 mM Cu(2+) or Zn(2+). Catalyzes the formation of a C-F bond by combining S-adenosyl-L-methionine (SAM) and fluoride to generate 5'-fluoro-5'-deoxyadenosine (5'-FDA) and L-methionine. Probably involved in fluoroacetate (FAc) and 4-fluorothreonine (4-FT) biosynthesis. In vitro, can also catalyze the conversion of chloride and SAM to 5'-chloro-5'-deoxyadenosine (5'-CIDA) and L-methionine in the presence of L-amino acid oxidase. The chain is Fluorinase from Nocardia brasiliensis (strain ATCC 700358 / HUJEG-1).